Reading from the N-terminus, the 37-residue chain is Cytochrome b6-f complex subunit 5 (37 aa).

A helical transmembrane segment spans residues 5 to 25 (LLSGIVLGLIPITLLGLFVTA).

This sequence belongs to the PetG family. As to quaternary structure, the 4 large subunits of the cytochrome b6-f complex are cytochrome b6, subunit IV (17 kDa polypeptide, PetD), cytochrome f and the Rieske protein, while the 4 small subunits are PetG, PetL, PetM and PetN. The complex functions as a dimer.

The protein localises to the plastid. Its subcellular location is the chloroplast thylakoid membrane. In terms of biological role, component of the cytochrome b6-f complex, which mediates electron transfer between photosystem II (PSII) and photosystem I (PSI), cyclic electron flow around PSI, and state transitions. PetG is required for either the stability or assembly of the cytochrome b6-f complex. In Marchantia polymorpha (Common liverwort), this protein is Cytochrome b6-f complex subunit 5.